Consider the following 62-residue polypeptide: U-myrmeciitoxin(01)-Mg3a (62 aa).

Residues methionine 1–alanine 24 form the signal peptide.

In terms of tissue distribution, expressed by the venom gland.

Its subcellular location is the secreted. Its function is as follows. May have antimicrobial properties, like most ant linear peptides. In Myrmecia gulosa (Red bulldog ant), this protein is U-myrmeciitoxin(01)-Mg3a.